The primary structure comprises 523 residues: Endoglucanase 19 (523 aa).

Positions 1 to 52 are cleaved as a signal peptide; the sequence is MCSWSLSSHTLTSPVRQAAMEPKSSSCGGAGIRLRLLVVLHLLLLVPSSAMA. Residue Asp107 is the Nucleophile of the active site. The N-linked (GlcNAc...) asparagine glycan is linked to Asn279. Active-site residues include His442, Asp493, and Glu502.

Belongs to the glycosyl hydrolase 9 (cellulase E) family.

It is found in the secreted. The enzyme catalyses Endohydrolysis of (1-&gt;4)-beta-D-glucosidic linkages in cellulose, lichenin and cereal beta-D-glucans.. This Oryza sativa subsp. japonica (Rice) protein is Endoglucanase 19.